Reading from the N-terminus, the 182-residue chain is A-type ATP synthase subunit E (182 aa).

Belongs to the V-ATPase E subunit family. As to quaternary structure, has multiple subunits with at least A(3), B(3), C, D, E, F, H, I and proteolipid K(x).

It localises to the cell membrane. Functionally, component of the A-type ATP synthase that produces ATP from ADP in the presence of a proton gradient across the membrane. The sequence is that of A-type ATP synthase subunit E from Methanothrix thermoacetophila (strain DSM 6194 / JCM 14653 / NBRC 101360 / PT) (Methanosaeta thermophila).